The sequence spans 821 residues: Ribonuclease R (821 aa).

One can recognise an RNB domain in the interval 267–593 (RVDLRALPLV…LLHRAIKYLI (327 aa)). The S1 motif domain maps to 652–733 (GEELEGVVAN…DDRQIDFELV (82 aa)). The tract at residues 739–821 (LRGQGKTAKK…KSGKVRDKTK (83 aa)) is disordered. 2 stretches are compositionally biased toward basic and acidic residues: residues 748-764 (KRAD…KEAA) and 774-794 (TKSE…EGRS). Positions 795–814 (KPKKTKAPKKRKDQARKKSG) are enriched in basic residues.

This sequence belongs to the RNR ribonuclease family. RNase R subfamily.

Its subcellular location is the cytoplasm. The catalysed reaction is Exonucleolytic cleavage in the 3'- to 5'-direction to yield nucleoside 5'-phosphates.. In terms of biological role, 3'-5' exoribonuclease that releases 5'-nucleoside monophosphates and is involved in maturation of structured RNAs. The protein is Ribonuclease R of Vibrio cholerae serotype O1 (strain ATCC 39315 / El Tor Inaba N16961).